Reading from the N-terminus, the 586-residue chain is MRVLVAETGREDNVSVHSREVSVNGSDSGTGNDAYKLETDDEHPPATPVRGLSTRSQKRPFRPLTIQQDEDVENDTGMNTEYNDDNSSLVNTPRDSTTYAETNSPNTEKLAGRDDDRSLLNLIDRGEIDSKRQRHYVPVHCKRMPKKEITLNQKLYVSQVIGPADAPKSKTIFGKRIMQWEPSQFKESVWASEISKSGKYLATAGKDAIIRVWKVIETPERRETLLKEGPQSCGRFFTPSSIFEPEPVLECVGHNAEVLSISWSKNDFLLTSSADRTVRLWHPKSTKSLAVFRHNEIVTCVAFHPIDDRYFVSGSLDCKIQLWSILRHKILHWTELEYVVSTICFYPDGESIVVGMFYGLCAIYETKNLQYVSSWLIHHSPSRNKKCRVTGLQCASIIPNDSKSDNVVLVSTNDNAIRLYNTVTHALVLKLSDAHRVNGRVLSRLSEDNSYIISGSDTNEVVLWHIPNKVLINASRKRSVILHLPTETFKVCSERLTSTIIAPARTAVEAKESEHDRSLIAEGYNLVKPHSHRSYGTPPVHPIDIIIATNMAGMTIVLCVDYDLGNSHHGFRNSKFGHFVKRLLRT.

The interval 1-115 is disordered; the sequence is MRVLVAETGR…NTEKLAGRDD (115 aa). Residues 8 to 20 show a composition bias toward basic and acidic residues; the sequence is TGREDNVSVHSRE. Residues 21 to 31 are compositionally biased toward polar residues; that stretch reads VSVNGSDSGTG. Residues 35-44 show a composition bias toward basic and acidic residues; that stretch reads YKLETDDEHP. Residues 76–107 show a composition bias toward polar residues; sequence TGMNTEYNDDNSSLVNTPRDSTTYAETNSPNT. 6 WD repeats span residues 184–223, 253–291, 293–333, 335–374, 387–430, and 432–474; these read QFKESVWASEISKSGKYLATAGKDAIIRVWKVIETPERRE, GHNAEVLSISWSKNDFLLTSSADRTVRLWHPKSTKSLAV, RHNE…ILHW, ELEYVVSTICFYPDGESIVVGMFYGLCAIYETKNLQYVSS, CRVT…LVLK, and SDAH…LINA.

Its subcellular location is the cytoplasm. It is found in the nucleus. This is an uncharacterized protein from Schizosaccharomyces pombe (strain 972 / ATCC 24843) (Fission yeast).